The primary structure comprises 152 residues: Small ribosomal subunit protein uS13 (152 aa).

This sequence belongs to the universal ribosomal protein uS13 family. Part of the 30S ribosomal subunit. Forms a loose heterodimer with protein S19. Forms two bridges to the 50S subunit in the 70S ribosome.

Functionally, located at the top of the head of the 30S subunit, it contacts several helices of the 16S rRNA. In the 70S ribosome it contacts the 23S rRNA (bridge B1a) and protein L5 of the 50S subunit (bridge B1b), connecting the 2 subunits; these bridges are implicated in subunit movement. The polypeptide is Small ribosomal subunit protein uS13 (Pyrobaculum arsenaticum (strain DSM 13514 / JCM 11321 / PZ6)).